Reading from the N-terminus, the 1595-residue chain is Pentafunctional AROM polypeptide (1595 aa).

A 3-dehydroquinate synthase region spans residues 1 to 384 (MGVPTKISIL…HEPRASTVSN (384 aa)). Residues 44-46 (DTN), 81-84 (ESSK), 114-116 (GGV), and Asp119 contribute to the NAD(+) site. Arg130 serves as a coordination point for 7-phospho-2-dehydro-3-deoxy-D-arabino-heptonate. 139 to 140 (TT) contributes to the NAD(+) binding site. 2 residues coordinate 7-phospho-2-dehydro-3-deoxy-D-arabino-heptonate: Asp146 and Lys152. Lys161 contributes to the NAD(+) binding site. Position 162 (Asn162) interacts with 7-phospho-2-dehydro-3-deoxy-D-arabino-heptonate. NAD(+)-binding positions include 179–182 (FLNT) and Asn190. Glu194 serves as a coordination point for Zn(2+). Residues 194-197 (EVIK) and Lys250 each bind 7-phospho-2-dehydro-3-deoxy-D-arabino-heptonate. Glu260 serves as the catalytic Proton acceptor; for 3-dehydroquinate synthase activity. 7-phospho-2-dehydro-3-deoxy-D-arabino-heptonate contacts are provided by residues 264 to 268 (RNLLN) and His271. Residue His271 participates in Zn(2+) binding. The Proton acceptor; for 3-dehydroquinate synthase activity role is filled by His275. Residues His287 and Lys356 each coordinate 7-phospho-2-dehydro-3-deoxy-D-arabino-heptonate. Residue His287 participates in Zn(2+) binding. Residues 397-842 (VSPGVPKGLD…WDSLAQTFKV (446 aa)) form an EPSP synthase region. Cys824 (for EPSP synthase activity) is an active-site residue. The interval 866-1057 (ASIFIIGMRG…RRKENTFFVS (192 aa)) is shikimate kinase. An ATP-binding site is contributed by 872–879 (GMRGAGKT). The 3-dehydroquinase stretch occupies residues 1058 to 1278 (LTLPDLGLAA…AAPGQLSARE (221 aa)). Residue His1181 is the Proton acceptor; for 3-dehydroquinate dehydratase activity of the active site. The active-site Schiff-base intermediate with substrate; for 3-dehydroquinate dehydratase activity is Lys1209. The tract at residues 1291-1595 (AKKFAVIGNP…MGVLPSEDIS (305 aa)) is shikimate dehydrogenase.

In the N-terminal section; belongs to the sugar phosphate cyclases superfamily. Dehydroquinate synthase family. The protein in the 2nd section; belongs to the EPSP synthase family. It in the 3rd section; belongs to the shikimate kinase family. This sequence in the 4th section; belongs to the type-I 3-dehydroquinase family. In the C-terminal section; belongs to the shikimate dehydrogenase family. In terms of assembly, homodimer. It depends on Zn(2+) as a cofactor.

The protein localises to the cytoplasm. The enzyme catalyses 7-phospho-2-dehydro-3-deoxy-D-arabino-heptonate = 3-dehydroquinate + phosphate. The catalysed reaction is 3-dehydroquinate = 3-dehydroshikimate + H2O. It carries out the reaction shikimate + NADP(+) = 3-dehydroshikimate + NADPH + H(+). It catalyses the reaction shikimate + ATP = 3-phosphoshikimate + ADP + H(+). The enzyme catalyses 3-phosphoshikimate + phosphoenolpyruvate = 5-O-(1-carboxyvinyl)-3-phosphoshikimate + phosphate. The protein operates within metabolic intermediate biosynthesis; chorismate biosynthesis; chorismate from D-erythrose 4-phosphate and phosphoenolpyruvate: step 2/7. It participates in metabolic intermediate biosynthesis; chorismate biosynthesis; chorismate from D-erythrose 4-phosphate and phosphoenolpyruvate: step 3/7. Its pathway is metabolic intermediate biosynthesis; chorismate biosynthesis; chorismate from D-erythrose 4-phosphate and phosphoenolpyruvate: step 4/7. It functions in the pathway metabolic intermediate biosynthesis; chorismate biosynthesis; chorismate from D-erythrose 4-phosphate and phosphoenolpyruvate: step 5/7. The protein operates within metabolic intermediate biosynthesis; chorismate biosynthesis; chorismate from D-erythrose 4-phosphate and phosphoenolpyruvate: step 6/7. In terms of biological role, the AROM polypeptide catalyzes 5 consecutive enzymatic reactions in prechorismate polyaromatic amino acid biosynthesis. The protein is Pentafunctional AROM polypeptide of Ajellomyces capsulatus (strain H143) (Darling's disease fungus).